The chain runs to 476 residues: MNAAVRPVSADTAIADISLAAWGRKEILIAETEMPGLMATREEFAAAQPLKGARIAGSLHMTIQTAVLIETLKALGAEVRWASCNIFSTQDHAAAAIAETGTPVFAIKGESLADYWDYTHRIFEFGAAGTEGEGPNMILDDGGDATMLLHLGMRAEKDLSVLDNPASEEEKIAFAAIRAKLAQDPTWYTRKSAHIIGVTEETTTGVHRLNEMSAKGTLKFRAINVNDSVTKSKFDNLYGCRESLVDGIKRATDVMIAGKVAVVAGYGDVGKGCAQALRALSAQVWVTEIDPINALQAAMEGYKVVTMEWAADKADIFVTTTGNRDIIRHEHMVAMKNEAIVCNIGHFDNEIDVASIEQYQWEEIKPQVDHITFPDGKKIILLAKGRLVNLGCATGHPSFVMSASFANQTIAQIELFTKPDAYEVGKVYVLPKILDEKVARLHLKKVGAMLTELTDGQAAYIGVSKQGPYKPETYRY.

Positions 62, 141, and 201 each coordinate substrate. Residue 202–204 participates in NAD(+) binding; it reads TTT. Lys-231 and Asp-235 together coordinate substrate. Residues Asn-236, 265–270, Glu-288, Asn-323, 344–346, and Asn-389 each bind NAD(+); these read GYGDVG and IGH.

Belongs to the adenosylhomocysteinase family. NAD(+) serves as cofactor.

It localises to the cytoplasm. The enzyme catalyses S-adenosyl-L-homocysteine + H2O = L-homocysteine + adenosine. The protein operates within amino-acid biosynthesis; L-homocysteine biosynthesis; L-homocysteine from S-adenosyl-L-homocysteine: step 1/1. May play a key role in the regulation of the intracellular concentration of adenosylhomocysteine. In Delftia acidovorans (strain DSM 14801 / SPH-1), this protein is Adenosylhomocysteinase.